Consider the following 132-residue polypeptide: uncharacterized protein (132 aa).

The first 19 residues, 1 to 19 (MKKALFLVGLVFTAGVISS), serve as a signal peptide directing secretion. Cysteine 20 is lipidated: N-palmitoyl cysteine. A lipid anchor (S-diacylglycerol cysteine) is attached at cysteine 20.

The protein localises to the cell membrane. This is an uncharacterized protein from Aquifex aeolicus (strain VF5).